An 83-amino-acid polypeptide reads, in one-letter code: Small ribosomal subunit protein bS16 (83 aa).

The protein belongs to the bacterial ribosomal protein bS16 family.

The polypeptide is Small ribosomal subunit protein bS16 (Acidovorax ebreus (strain TPSY) (Diaphorobacter sp. (strain TPSY))).